Consider the following 422-residue polypeptide: Metallocarboxypeptidase A (422 aa).

A signal peptide spans Met-1 to Ala-17. The propeptide at Ala-18–Pro-112 is activation peptide. In terms of domain architecture, Peptidase M14 spans Ser-119–Val-419. Zn(2+)-binding residues include His-179 and Glu-182. Residues His-179 to Glu-182, Arg-237, and Asn-254 to Arg-255 each bind substrate. A disulfide bridge connects residues Cys-248 and Cys-271. His-309 provides a ligand contact to Zn(2+). Ser-310 to Tyr-311 contributes to the substrate binding site. The active-site Proton donor/acceptor is the Glu-385.

Belongs to the peptidase M14 family. Zn(2+) serves as cofactor.

It is found in the secreted. Its function is as follows. Extracellular metalloprotease that contributes to pathogenicity. This Trichophyton equinum (Horse ringworm fungus) protein is Metallocarboxypeptidase A (MCPA).